Here is a 137-residue protein sequence, read N- to C-terminus: DNA-binding protein H-NS (137 aa).

The DNA-binding element occupies 112–117 (QGRTPA).

The protein belongs to the histone-like protein H-NS family. As to quaternary structure, homodimer that oligomerizes on DNA into higher-order complexes that form bridges between disparate regions of DNA compacting it. Interacts with Hha, Cnu and StpA.

The protein resides in the cytoplasm. Its subcellular location is the nucleoid. Its function is as follows. A DNA-binding protein implicated in transcriptional repression and chromosome organization and compaction. Binds nucleation sites in AT-rich DNA and bridges them, forming higher-order nucleoprotein complexes and condensing the chromosome. As many horizontally transferred genes are AT-rich, it plays a central role in silencing foreign genes. A subset of genes are repressed by H-NS in association with other proteins. The sequence is that of DNA-binding protein H-NS (hns) from Escherichia coli O6:H1 (strain CFT073 / ATCC 700928 / UPEC).